Here is a 501-residue protein sequence, read N- to C-terminus: Tegument protein US24 (501 aa).

Belongs to the herpesviridae US22 family.

It localises to the virion tegument. The sequence is that of Tegument protein US24 (US24) from Human cytomegalovirus (strain AD169) (HHV-5).